The chain runs to 529 residues: Bifunctional purine biosynthesis protein PurH (529 aa).

The MGS-like domain occupies 2-149 (TDLHPVRRAL…KNHAFVNVVV (148 aa)).

The protein belongs to the PurH family.

It carries out the reaction (6R)-10-formyltetrahydrofolate + 5-amino-1-(5-phospho-beta-D-ribosyl)imidazole-4-carboxamide = 5-formamido-1-(5-phospho-D-ribosyl)imidazole-4-carboxamide + (6S)-5,6,7,8-tetrahydrofolate. The catalysed reaction is IMP + H2O = 5-formamido-1-(5-phospho-D-ribosyl)imidazole-4-carboxamide. The protein operates within purine metabolism; IMP biosynthesis via de novo pathway; 5-formamido-1-(5-phospho-D-ribosyl)imidazole-4-carboxamide from 5-amino-1-(5-phospho-D-ribosyl)imidazole-4-carboxamide (10-formyl THF route): step 1/1. It functions in the pathway purine metabolism; IMP biosynthesis via de novo pathway; IMP from 5-formamido-1-(5-phospho-D-ribosyl)imidazole-4-carboxamide: step 1/1. This is Bifunctional purine biosynthesis protein PurH from Ruegeria sp. (strain TM1040) (Silicibacter sp.).